Reading from the N-terminus, the 648-residue chain is Dystrotelin (648 aa).

The segment at 223-279 (QHRVHCHACKAFPITGLRYRCLKCLNVHLCQSCFLTERRSRKHKPSHSVLEYCTQPS) adopts a ZZ-type zinc-finger fold. Residues Cys228, Cys231, Cys243, Cys246, Cys252, Cys255, His265, and His269 each contribute to the Zn(2+) site. The stretch at 367–446 (QRETAELQKD…LDTVRHLLSL (80 aa)) forms a coiled coil. Residues 455–474 (SHSNLQLEQDGSINENNWTQ) show a composition bias toward polar residues. Disordered stretches follow at residues 455-509 (SHSN…DTLY) and 536-557 (QREE…EGLP). Residues 479 to 502 (KPHESSSTEHEVEERGTRQERRFE) are compositionally biased toward basic and acidic residues. Over residues 538–548 (EEEELQEEEEG) the composition is skewed to acidic residues.

The protein localises to the cell membrane. In Danio rerio (Zebrafish), this protein is Dystrotelin (dytn).